Reading from the N-terminus, the 567-residue chain is MHGRLKVKTSEEQAEAKRLEREQKLKLYQTATQTVFQKRQAGELDESVLELTSQILGANPDFATLWNCRREVLQRLEVQKSPEELAALVKAELGFLESCLRVNPKSYGTWHHRCWLLGRLPEPNWARELELCARFLEVDERNFHCWDYRRFVASQAAVPPAEELAFTDSLITRNFSNYSSWHYRSCLLPQLHPQPDSGPQGRLPEDVLLKELELVQNAFFTDPNDQSAWFYHRWLLGRADPQDALRCLHVSRDEACLTVSFSRPLLVGPSTETLLLMVNESPLSVEWRTPDGRNRPSHVWLCDLPAASLNDHLPQHTFRVIWTAGNAQKECVLLKGRQEGWCRDSATDEQLFRCELSVEKSTVLQSELESCKELQELEPENKWCLLTIILLMRALDPLLYEKETLQYFQTLKAVDPMRAAYLDDLRSKFLLENSVLKMEYADVRVLHLGHKDLTVLCHLEQLLLVTHLDLSHNRLRALPPALAALRCLEVLQANDNAIESLDGVTNLPRLQELSLCNNRLQQPAVLQPLASCPRLVLLNLQDNPLCQAVGISEHLAELLPSVSSILT.

6 PFTA repeats span residues 44–78, 88–122, 124–158, 159–193, 207–241, and 363–397; these read LDESVLELTSQILGANPDFATLWNCRREVLQRLEV, LVKAELGFLESCLRVNPKSYGTWHHRCWLLGRLPE, NWARELELCARFLEVDERNFHCWDYRRFVASQAAV, PPAEELAFTDSLITRNFSNYSSWHYRSCLLPQLHP, VLLKELELVQNAFFTDPNDQSAWFYHRWLLGRADP, and VLQSELESCKELQELEPENKWCLLTIILLMRALDP. S98 carries the phosphoserine modification. LRR repeat units follow at residues 442–463, 464–486, 487–508, 509–530, and 534–555; these read DVRVLHLGHKDLTVLCHLEQLL, LVTHLDLSHNRLRALPPALAALR, CLEVLQANDNAIESLDGVTNLP, RLQELSLCNNRLQQPAVLQPLA, and RLVLLNLQDNPLCQAVGISEHL.

This sequence belongs to the protein prenyltransferase subunit alpha family. Heterotrimer composed of RABGGTA, RABGGTB and CHM; within this trimer, RABGGTA and RABGGTB form the catalytic component B, while CHM (component A) mediates peptide substrate binding. The Rab GGTase dimer (RGGT) interacts with CHM (component A) prior to Rab protein binding; the association is stabilized by geranylgeranyl pyrophosphate (GGpp). The CHM:RGGT:Rab complex is destabilized by GGpp. Interacts with non-phosphorylated form of RAB8A; phosphorylation of RAB8A disrupts this interaction.

It catalyses the reaction geranylgeranyl diphosphate + L-cysteinyl-[protein] = S-geranylgeranyl-L-cysteinyl-[protein] + diphosphate. The enzymatic reaction requires the aid of a Rab escort protein (also called component A), such as CHM. Catalyzes the transfer of a geranylgeranyl moiety from geranylgeranyl diphosphate to both cysteines of Rab proteins with the C-terminal sequence -XXCC, -XCXC and -CCXX, such as RAB1A, RAB3A, RAB5A and RAB7A. The protein is Geranylgeranyl transferase type-2 subunit alpha (RABGGTA) of Sus scrofa (Pig).